The sequence spans 436 residues: Septin-7 (436 aa).

Ser2 carries the N-acetylserine modification. Phosphotyrosine is present on Tyr29. The 270-residue stretch at Arg46–Ala315 folds into the Septin-type G domain. The segment at Arg46–Val316 is interaction with SEPTIN12. The G1 motif stretch occupies residues Gly56 to Ser63. Gly56–Ser63 lines the GTP pocket. Ser76 is subject to Phosphoserine. GTP contacts are provided by residues Thr89, Gly115, and Lys194–Glu202. Residues Asp112–Gly115 form a G3 motif region. A G4 motif region spans residues Ala193–Asp196. Residue Thr227 is modified to Phosphothreonine. GTP is bound by residues Gly249 and Arg264. A coiled-coil region spans residues Thr331–Phe436. Ser333 is modified (phosphoserine). Lys372 is modified (N6-acetyllysine). Residues Glu377–Asn409 are compositionally biased toward basic and acidic residues. Positions Glu377–Phe436 are disordered. A Phosphoserine modification is found at Ser423. At Thr425 the chain carries Phosphothreonine.

This sequence belongs to the TRAFAC class TrmE-Era-EngA-EngB-Septin-like GTPase superfamily. Septin GTPase family. In terms of assembly, septins polymerize into heterooligomeric protein complexes that form filaments, and associate with cellular membranes, actin filaments and microtubules. GTPase activity is required for filament formation. Filaments are assembled from asymmetrical heterotrimers, composed of SEPTIN2, SEPTIN6 and SEPTIN7 that associate head-to-head to form a hexameric unit. Within the trimer, directly interacts with SEPTIN6, while interaction with SEPTIN2 seems indirect. In the absence of SEPTIN6, forms homodimers. Interacts directly with CENPE and links CENPE to septin filaments composed of SEPTIN2, SEPTIN6 and SEPTIN7. Interacts with SEPTIN5. Component of a septin core octameric complex consisting of SEPTIN12, SEPTIN7, SEPTIN6 and SEPTIN2 or SEPTIN4 in the order 12-7-6-2-2-6-7-12 or 12-7-6-4-4-6-7-12 and located in the sperm annulus; the SEPTIN12:SEPTIN7 association is mediated by the respective GTP-binding domains. Interacts with SEPTIN2, SEPTIN7, SEPTIN8, SEPTIN9 and SEPTIN11.

It is found in the cytoplasm. Its subcellular location is the chromosome. The protein resides in the centromere. The protein localises to the kinetochore. It localises to the cytoskeleton. It is found in the spindle. Its subcellular location is the cleavage furrow. The protein resides in the midbody. The protein localises to the cilium axoneme. It localises to the cell projection. It is found in the cilium. Its subcellular location is the flagellum. Filament-forming cytoskeletal GTPase. Required for normal organization of the actin cytoskeleton. Required for normal progress through mitosis. Involved in cytokinesis. Required for normal association of CENPE with the kinetochore. Plays a role in ciliogenesis and collective cell movements. Forms a filamentous structure with SEPTIN12, SEPTIN6, SEPTIN2 and probably SEPTIN4 at the sperm annulus which is required for the structural integrity and motility of the sperm tail during postmeiotic differentiation. The chain is Septin-7 from Rattus norvegicus (Rat).